The primary structure comprises 504 residues: L-amino-acid oxidase (504 aa).

The N-terminal stretch at 1 to 18 (MNVFFMFSLLFLAALGSC) is a signal peptide. A disulfide bond links Cys-28 and Cys-191. Residues 61 to 62 (MS), 81 to 82 (EA), Arg-89, and 105 to 108 (GPMR) each bind FAD. Residue Arg-108 participates in substrate binding. An N-linked (GlcNAc...) asparagine glycan is attached at Asn-190. A substrate-binding site is contributed by His-241. Val-279 contributes to the FAD binding site. A disulfide bond links Cys-349 and Cys-430. Residue Asn-379 is glycosylated (N-linked (GlcNAc...) asparagine). Tyr-390 contributes to the substrate binding site. FAD-binding positions include Glu-475 and 482–487 (GWIDST). Residue 482–483 (GW) participates in substrate binding.

Belongs to the flavin monoamine oxidase family. FIG1 subfamily. Homodimer; non-covalently linked. FAD is required as a cofactor. In terms of tissue distribution, expressed by the venom gland.

The protein resides in the secreted. It catalyses the reaction an L-alpha-amino acid + O2 + H2O = a 2-oxocarboxylate + H2O2 + NH4(+). It carries out the reaction L-leucine + O2 + H2O = 4-methyl-2-oxopentanoate + H2O2 + NH4(+). In terms of biological role, catalyzes an oxidative deamination of predominantly hydrophobic and aromatic L-amino acids, thus producing hydrogen peroxide that may contribute to the diverse toxic effects of this enzyme. Shows activity on L-Leu. Exhibits diverse biological activities, such as apoptosis, and inhibition of agonist- and shear stress-induced platelet aggregation (SIPA). Effects of snake L-amino oxidases on platelets are controversial, since they either induce aggregation or inhibit agonist-induced aggregation. These different effects are probably due to different experimental conditions. This protein may also induce hemorrhage, hemolysis, edema, antibacterial and antiparasitic activities. The chain is L-amino-acid oxidase from Gloydius blomhoffii (Mamushi).